A 393-amino-acid chain; its full sequence is PPE family protein PPE26 (393 aa).

The protein belongs to the mycobacterial PPE family. Interacts with human TLR2.

Probably plays a key role in regulating innate and adaptive immune responses through human Toll-like receptor 2 (TLR2). Interacts with TLR2, leading to the subsequent activation of the mitogen-activated protein kinase (MAPK) and nuclear factor kappa B (NF-kappa-B) signaling pathways. Stimulates macrophage activation by augmenting pro-inflammatory cytokine production (TNF-alpha, IL-6 and IL-12p40) and the expression of cell surface molecules (CD80, CD86, MHC class I and II). Also participates in adaptive immunity by directing Th1-polarised immune responses. This is PPE family protein PPE26 from Mycobacterium tuberculosis (strain ATCC 25618 / H37Rv).